The chain runs to 749 residues: Semaphorin-3B (749 aa).

The N-terminal stretch at 1 to 24 (MGRAGAAAVIPGLALLWAVGLGSA) is a signal peptide. Positions 30–513 (RLRLSFQELQ…SRSAVAQIAL (484 aa)) constitute a Sema domain. N82 carries N-linked (GlcNAc...) asparagine glycosylation. A disulfide bond links C102 and C113. The N-linked (GlcNAc...) asparagine glycan is linked to N124. 3 disulfide bridges follow: C131–C140, C269–C380, and C293–C340. N-linked (GlcNAc...) asparagine glycosylation occurs at N427. Disulfide bonds link C516–C534 and C644–C710. One can recognise an Ig-like C2-type domain in the interval 573-659 (PALLEHKVFG…GFTQPLRRLS (87 aa)). A disordered region spans residues 702–749 (GSANSLRMCRPQPALQSLPLESRRKGRNRRTHAPEPRAERGPRSATHW). Residues 733 to 743 (HAPEPRAERGP) are compositionally biased toward basic and acidic residues.

It belongs to the semaphorin family. Expressed abundantly but differentially in a variety of neural and nonneural tissues.

Its subcellular location is the secreted. It is found in the endoplasmic reticulum. Inhibits axonal extension by providing local signals to specify territories inaccessible for growing axons. The polypeptide is Semaphorin-3B (SEMA3B) (Homo sapiens (Human)).